Reading from the N-terminus, the 825-residue chain is Translation initiation factor IF-2 (825 aa).

Composition is skewed to basic and acidic residues over residues 1–19 (MTKK…DNKK), 35–45 (RKGEKKTEGKR), 70–98 (LLKD…EYKK), and 113–122 (KKVESVEKPA). The interval 1–239 (MTKKQENETS…TQRKDRPLPE (239 aa)) is disordered. The segment covering 158–169 (PSSSRRPSSRPS) has biased composition (low complexity). Residues 181 to 191 (GRRRKSGKPGR) show a composition bias toward basic residues. The segment covering 194–208 (QNSYADQGRGANSNR) has biased composition (polar residues). Over residues 211–220 (QRKRKNKKHQ) the composition is skewed to basic residues. A tr-type G domain is found at 326 to 495 (VRPPVVTIMG…ILEADMLELK (170 aa)). A G1 region spans residues 335-342 (GHVDHGKT). Residue 335–342 (GHVDHGKT) coordinates GTP. Positions 360 to 364 (GITQN) are G2. Positions 381-384 (DTPG) are G3. GTP-binding positions include 381–385 (DTPGH) and 435–438 (NKMD). The G4 stretch occupies residues 435-438 (NKMD). Residues 471 to 473 (SAK) are G5.

Belongs to the TRAFAC class translation factor GTPase superfamily. Classic translation factor GTPase family. IF-2 subfamily.

It is found in the cytoplasm. Functionally, one of the essential components for the initiation of protein synthesis. Protects formylmethionyl-tRNA from spontaneous hydrolysis and promotes its binding to the 30S ribosomal subunits. Also involved in the hydrolysis of GTP during the formation of the 70S ribosomal complex. The polypeptide is Translation initiation factor IF-2 (Lactobacillus delbrueckii subsp. bulgaricus (strain ATCC 11842 / DSM 20081 / BCRC 10696 / JCM 1002 / NBRC 13953 / NCIMB 11778 / NCTC 12712 / WDCM 00102 / Lb 14)).